Consider the following 92-residue polypeptide: Long neurotoxin 1 (92 aa).

The signal sequence occupies residues 1-21 (MKILLLTLVVVTIVCLDLAYT). 5 disulfides stabilise this stretch: cysteine 24–cysteine 41, cysteine 34–cysteine 62, cysteine 47–cysteine 51, cysteine 66–cysteine 77, and cysteine 78–cysteine 83.

This sequence belongs to the three-finger toxin family. Long-chain subfamily. Type II alpha-neurotoxin sub-subfamily. Expressed by the venom gland.

Its subcellular location is the secreted. In terms of biological role, binds with high affinity to muscular (alpha-1/CHRNA1) and neuronal (alpha-7/CHRNA7) nicotinic acetylcholine receptor (nAChR) and inhibits acetylcholine from binding to the receptor, thereby impairing neuromuscular and neuronal transmission. This chain is Long neurotoxin 1, found in Hydrophis hardwickii (Hardwick's spine-bellied seasnake).